The following is a 243-amino-acid chain: tRNA (guanine-N(1)-)-methyltransferase (243 aa).

S-adenosyl-L-methionine contacts are provided by residues Gly-108 and 127–132; that span reads LGDYVL.

The protein belongs to the RNA methyltransferase TrmD family. As to quaternary structure, homodimer.

Its subcellular location is the cytoplasm. It carries out the reaction guanosine(37) in tRNA + S-adenosyl-L-methionine = N(1)-methylguanosine(37) in tRNA + S-adenosyl-L-homocysteine + H(+). Its function is as follows. Specifically methylates guanosine-37 in various tRNAs. The chain is tRNA (guanine-N(1)-)-methyltransferase from Streptococcus gordonii (strain Challis / ATCC 35105 / BCRC 15272 / CH1 / DL1 / V288).